The primary structure comprises 126 residues: Holo-[acyl-carrier-protein] synthase (126 aa).

Mg(2+) is bound by residues Asp9 and Glu58.

This sequence belongs to the P-Pant transferase superfamily. AcpS family. Mg(2+) is required as a cofactor.

It localises to the cytoplasm. It carries out the reaction apo-[ACP] + CoA = holo-[ACP] + adenosine 3',5'-bisphosphate + H(+). In terms of biological role, transfers the 4'-phosphopantetheine moiety from coenzyme A to a Ser of acyl-carrier-protein. This is Holo-[acyl-carrier-protein] synthase from Pectobacterium carotovorum subsp. carotovorum (strain PC1).